Consider the following 739-residue polypeptide: Double-strand break repair protein mus-23 (739 aa).

Residues Asp-16, His-18, Asp-56, and Asn-123 each contribute to the Mn(2+) site. His-124 (proton donor) is an active-site residue. 3 residues coordinate Mn(2+): His-212, His-240, and His-242. A disordered region spans residues 516–739 (FDAGQHKQAQ…KPGLLARRLG (224 aa)). Residues 523–532 (QAQRTKRFKR) show a composition bias toward basic residues. Basic and acidic residues predominate over residues 559–568 (VEPKGNDRPT). Positions 599–636 (KRGAAAKTTAAAKKAAPGKKAAPAKKAAPAKKAAPAKK) are enriched in low complexity. The span at 637 to 646 (APARGRKKKT) shows a compositional bias: basic residues. Residues 650 to 686 (DSDEEEEEDYPEDDDEEEEEADEEEEDVIMEDDEEDP) show a composition bias toward acidic residues. A compositionally biased stretch (low complexity) spans 694–722 (KATSRVASTRASARATPVRATPARATQAR).

Belongs to the MRE11/RAD32 family. Component of the MRN complex composed of two heterodimers RAD50 and MRE11 associated with a single NBS1. It depends on Mn(2+) as a cofactor.

Its subcellular location is the nucleus. It is found in the chromosome. The protein localises to the telomere. Core component of the MRN complex, which plays a central role in double-strand break (DSB) repair, DNA recombination, maintenance of telomere integrity and meiosis. The MRN complex is involved in the repair of DNA double-strand breaks (DSBs) via homologous recombination (HR), an error-free mechanism which primarily occurs during S and G2 phases. The complex (1) mediates the end resection of damaged DNA, which generates proper single-stranded DNA, a key initial steps in HR, and is (2) required for the recruitment of other repair factors and efficient activation of ATM and ATR upon DNA damage. Within the MRN complex, MRE11 possesses both single-strand endonuclease activity and double-strand-specific 3'-5' exonuclease activity. MRE11 first endonucleolytically cleaves the 5' strand at DNA DSB ends to prevent non-homologous end joining (NHEJ) and licence HR. It then generates a single-stranded DNA gap via 3' to 5' exonucleolytic degradation, which is required for single-strand invasion and recombination. The MRN complex is also required for the processing of R-loops. This Neurospora crassa (strain ATCC 24698 / 74-OR23-1A / CBS 708.71 / DSM 1257 / FGSC 987) protein is Double-strand break repair protein mus-23 (mus-23).